Consider the following 331-residue polypeptide: Cytochrome bo(3) ubiquinol oxidase subunit 2 (331 aa).

The N-terminal stretch at 1 to 23 (MTKANPFAALKWLSLAPALLLGG) is a signal peptide. Cys24 carries the N-palmitoyl cysteine lipid modification. Cys24 carries the S-diacylglycerol cysteine lipid modification. Over 24–41 (CDMTLFNPKGQVGMDERT) the chain is Periplasmic. A helical membrane pass occupies residues 42 to 62 (LIITATLLMLIVVIPVIVMTL). The Cytoplasmic segment spans residues 63–86 (AFAWKYRASNTQAEYKPDWHHSNR). The chain crosses the membrane as a helical span at residues 87 to 107 (IEAVVWLVPCVIIAILGWITW). Residues 108-331 (ESTHKLDPYR…DMHMQPSTQE (224 aa)) lie on the Periplasmic side of the membrane.

This sequence belongs to the cytochrome c oxidase subunit 2 family. Heterooctamer of two A chains, two B chains, two C chains and two D chains.

The protein resides in the cell inner membrane. Cytochrome bo(3) ubiquinol terminal oxidase is the component of the aerobic respiratory chain of E.coli that predominates when cells are grown at high aeration. Has proton pump activity across the membrane in addition to electron transfer, pumping 2 protons/electron. This chain is Cytochrome bo(3) ubiquinol oxidase subunit 2 (cyoA), found in Pseudomonas aeruginosa (strain ATCC 15692 / DSM 22644 / CIP 104116 / JCM 14847 / LMG 12228 / 1C / PRS 101 / PAO1).